Here is a 538-residue protein sequence, read N- to C-terminus: ATP synthase subunit beta 2 (538 aa).

The span at 1–10 (MADPQATNGT) shows a compositional bias: polar residues. A disordered region spans residues 1–30 (MADPQATNGTGAACAERDASDVGDVSDVGD). 185-192 (GGAGVGKT) lines the ATP pocket. The span at 494–505 (AAAREADARREA) shows a compositional bias: basic and acidic residues. The tract at residues 494 to 538 (AAAREADARREAAAAASVAGPGTTSGTTSDPASGSAEPQGARHGR) is disordered. Residues 506-529 (AAAASVAGPGTTSGTTSDPASGSA) show a composition bias toward low complexity.

Belongs to the ATPase alpha/beta chains family. As to quaternary structure, F-type ATPases have 2 components, CF(1) - the catalytic core - and CF(0) - the membrane proton channel. CF(1) has five subunits: alpha(3), beta(3), gamma(1), delta(1), epsilon(1). CF(0) has three main subunits: a(1), b(2) and c(9-12). The alpha and beta chains form an alternating ring which encloses part of the gamma chain. CF(1) is attached to CF(0) by a central stalk formed by the gamma and epsilon chains, while a peripheral stalk is formed by the delta and b chains.

The protein resides in the cell inner membrane. The catalysed reaction is ATP + H2O + 4 H(+)(in) = ADP + phosphate + 5 H(+)(out). In terms of biological role, produces ATP from ADP in the presence of a proton gradient across the membrane. The catalytic sites are hosted primarily by the beta subunits. The protein is ATP synthase subunit beta 2 of Burkholderia pseudomallei (strain K96243).